The following is a 638-amino-acid chain: Mediator of RNA polymerase II transcription subunit 17 (638 aa).

Positions 1 to 21 (MSDSFNLPLRPLTEKRERPDP) are disordered.

The protein belongs to the Mediator complex subunit 17 family. As to quaternary structure, component of the Mediator complex.

It localises to the nucleus. Its function is as follows. Component of the Mediator complex, a coactivator involved in the regulated transcription of nearly all RNA polymerase II-dependent genes. Mediator functions as a bridge to convey information from gene-specific regulatory proteins to the basal RNA polymerase II transcription machinery. Mediator is recruited to promoters by direct interactions with regulatory proteins and serves as a scaffold for the assembly of a functional preinitiation complex with RNA polymerase II and the general transcription factors. In Aspergillus oryzae (strain ATCC 42149 / RIB 40) (Yellow koji mold), this protein is Mediator of RNA polymerase II transcription subunit 17 (srb4).